Here is a 316-residue protein sequence, read N- to C-terminus: Neutrophil-stimulating factor 1 (316 aa).

Positions 1-21 (METSLPITVVFLIVLITGAQT) are cleaved as a signal peptide. Residues 126 to 316 (HGEMLERMTA…WFAVSWNDRG (191 aa)) form an involved in interaction with human CD47 region. A glycan (N-linked (GlcNAc...) asparagine) is linked at N169.

As to quaternary structure, interacts with human CD4. Interacts with human CD47; the interaction results in inhibition of phagocytosis activity of host macrophages. In terms of tissue distribution, female salivary gland (at protein level). Saliva (at protein level). Some expression in ovary and midgut (at protein level).

Its subcellular location is the secreted. Its function is as follows. Activates host neutrophils; induces expression of IL1B and CXCL2 at the bite site. Promotes activation of human CD4(+) T-cells. Inhibits phagocytosis activity of host macrophages via the interaction with CD47 receptor on their surface. Suppresses expression of pro-inflammatory cytokines, such as IFN-gamma/IFNG, IL2, TNF-alpha/TNF, IL12B, IL8/CXCL8, IL6, in host white blood cells. Reduces host polymorphonuclear neutrophil chemotaxis induced by N-formylmethionine-leucylphenylalanine (fMLF). Reduces CD11b/ITGAM expression in fMLF-induced host polymorphonuclear neutrophils. (Microbial infection) Enhances early replication of Zika virus in the host. This Aedes aegypti (Yellowfever mosquito) protein is Neutrophil-stimulating factor 1.